The following is a 370-amino-acid chain: 3 beta-hydroxysteroid dehydrogenase/Delta 5--&gt;4-isomerase (370 aa).

Catalysis depends on Tyr158, which acts as the Proton acceptor. Lys162 provides a ligand contact to NAD(+).

The protein belongs to the 3-beta-HSD family. Monomer.

The protein localises to the cytoplasm. The enzyme catalyses a 3beta-hydroxy-Delta(5)-steroid + NAD(+) = a 3-oxo-Delta(5)-steroid + NADH + H(+). The catalysed reaction is cholesterol + NAD(+) = cholest-5-en-3-one + NADH + H(+). It catalyses the reaction pregnenolone + NAD(+) = pregn-5-ene-3,20-dione + NADH + H(+). It carries out the reaction 3beta-hydroxyandrost-5-en-17-one + NAD(+) = androst-5-ene-3,17-dione + NADH + H(+). The enzyme catalyses a 3-oxo-Delta(5)-steroid = a 3-oxo-Delta(4)-steroid. The catalysed reaction is cholest-5-en-3-one = cholest-4-en-3-one. It catalyses the reaction pregn-5-ene-3,20-dione = progesterone. It carries out the reaction androst-5-ene-3,17-dione = androst-4-ene-3,17-dione. Its pathway is lipid metabolism; steroid biosynthesis. In terms of biological role, 3-beta-HSD is a bifunctional enzyme, that catalyzes the oxidation and isomerization of cholesterol, pregnenolone, and dehydroepiandrosterone (DHEA) into cholest-4-en-3-one, progesterone, and androsterone, respectively. This is 3 beta-hydroxysteroid dehydrogenase/Delta 5--&gt;4-isomerase from Mycobacterium tuberculosis (strain CDC 1551 / Oshkosh).